The primary structure comprises 185 residues: Urease accessory protein UreE (185 aa).

The tract at residues 153-185 (LRANSAQGHGHSHSHSHDHHGYHHHGDGHWHKH) is disordered. Residues 162–175 (GHSHSHSHDHHGYH) are compositionally biased toward basic residues. Basic and acidic residues predominate over residues 176–185 (HHGDGHWHKH).

Belongs to the UreE family.

It is found in the cytoplasm. Involved in urease metallocenter assembly. Binds nickel. Probably functions as a nickel donor during metallocenter assembly. This Haemophilus influenzae (strain 86-028NP) protein is Urease accessory protein UreE.